A 139-amino-acid polypeptide reads, in one-letter code: D-ribose pyranase (139 aa).

The active-site Proton donor is the histidine 20. Residues aspartate 28, histidine 106, and 128-130 (YAN) contribute to the substrate site.

It belongs to the RbsD / FucU family. RbsD subfamily. In terms of assembly, homodecamer.

The protein localises to the cytoplasm. The catalysed reaction is beta-D-ribopyranose = beta-D-ribofuranose. It functions in the pathway carbohydrate metabolism; D-ribose degradation; D-ribose 5-phosphate from beta-D-ribopyranose: step 1/2. Functionally, catalyzes the interconversion of beta-pyran and beta-furan forms of D-ribose. The sequence is that of D-ribose pyranase from Maridesulfovibrio salexigens (strain ATCC 14822 / DSM 2638 / NCIMB 8403 / VKM B-1763) (Desulfovibrio salexigens).